The primary structure comprises 240 residues: 3-deoxy-D-manno-octulosonic acid kinase (240 aa).

Asp170 is a catalytic residue.

This sequence belongs to the protein kinase superfamily. KdkA/RfaP family.

It is found in the cell inner membrane. It catalyses the reaction an alpha-Kdo-(2-&gt;6)-lipid IVA + ATP = a 4-O-phospho-alpha-Kdo-(2-&gt;6)-lipid IVA + ADP + H(+). The protein operates within bacterial outer membrane biogenesis; LPS core biosynthesis. In terms of biological role, catalyzes the ATP-dependent phosphorylation of the 3-deoxy-D-manno-octulosonic acid (Kdo) residue in Kdo-lipid IV(A) at the 4-OH position. This is 3-deoxy-D-manno-octulosonic acid kinase from Actinobacillus succinogenes (strain ATCC 55618 / DSM 22257 / CCUG 43843 / 130Z).